The primary structure comprises 107 residues: UPF0045 protein in glkA 3'region (107 aa).

This sequence belongs to the UPF0045 family.

The sequence is that of UPF0045 protein in glkA 3'region (dglA) from Staphylococcus xylosus.